We begin with the raw amino-acid sequence, 432 residues long: Adenylosuccinate synthetase (432 aa).

Residues 12-18 (GDEGKGK) and 40-42 (GHT) contribute to the GTP site. Catalysis depends on Asp-13, which acts as the Proton acceptor. 2 residues coordinate Mg(2+): Asp-13 and Gly-40. IMP contacts are provided by residues 13 to 16 (DEGK), 38 to 41 (NAGH), Thr-132, Arg-146, Gln-226, Thr-241, and Arg-305. Catalysis depends on His-41, which acts as the Proton donor. 301–307 (TVTGRKR) serves as a coordination point for substrate. Residues Arg-307, 333–335 (KLD), and 415–417 (STS) each bind GTP.

The protein belongs to the adenylosuccinate synthetase family. In terms of assembly, homodimer. The cofactor is Mg(2+).

The protein resides in the cytoplasm. The enzyme catalyses IMP + L-aspartate + GTP = N(6)-(1,2-dicarboxyethyl)-AMP + GDP + phosphate + 2 H(+). Its pathway is purine metabolism; AMP biosynthesis via de novo pathway; AMP from IMP: step 1/2. Plays an important role in the de novo pathway of purine nucleotide biosynthesis. Catalyzes the first committed step in the biosynthesis of AMP from IMP. The polypeptide is Adenylosuccinate synthetase (Agrobacterium fabrum (strain C58 / ATCC 33970) (Agrobacterium tumefaciens (strain C58))).